The chain runs to 461 residues: Regulatory protein AtoC (461 aa).

The 115-residue stretch at 6–120 folds into the Response regulatory domain; sequence RILIVDDEDN…ELNLIVQRAL (115 aa). 4-aspartylphosphate is present on aspartate 55. Residue histidine 73 is modified to Phosphohistidine. One can recognise a Sigma-54 factor interaction domain in the interval 145–374; that stretch reads ILTNSPAMMD…LSNVIERAVV (230 aa). ATP is bound by residues 173-180 and 236-245; these read GESGTGKE and ANEGTLLLDE. The segment at residues 433 to 452 is a DNA-binding region (H-T-H motif); sequence RTRTALMLGISRRALMYKLQ.

Post-translationally, phosphorylated by AtoS. Contains two phosphorylation sites, which are both involved in the transduction of the acetoacetate signal. Asp-55 is probably the primary phosphorylation site, but either both residues can be phosphorylated independently by AtoS or the phosphate group can be transferred between them. The N-terminus is blocked.

It is found in the cytoplasm. Member of the two-component regulatory system AtoS/AtoC. In the presence of acetoacetate, AtoS/AtoC stimulates the expression of the atoDAEB operon, leading to short chain fatty acid catabolism and activation of the poly-(R)-3-hydroxybutyrate (cPHB) biosynthetic pathway. Also induces the operon in response to spermidine. Involved in the regulation of motility and chemotaxis, via transcriptional induction of the flagellar regulon. AtoC acts by binding directly to the promoter region of the target genes. In addition to its role as a transcriptional regulator, functions as a post-translational regulator that inhibits polyamine biosynthesis via regulation of ornithine decarboxylase (ODC). In Escherichia coli (strain K12), this protein is Regulatory protein AtoC (atoC).